Reading from the N-terminus, the 135-residue chain is Small ribosomal subunit protein uS8 (135 aa).

The protein belongs to the universal ribosomal protein uS8 family. Part of the 30S ribosomal subunit. Contacts proteins S5 and S12.

One of the primary rRNA binding proteins, it binds directly to 16S rRNA central domain where it helps coordinate assembly of the platform of the 30S subunit. The sequence is that of Small ribosomal subunit protein uS8 from Cutibacterium acnes (strain DSM 16379 / KPA171202) (Propionibacterium acnes).